Reading from the N-terminus, the 335-residue chain is Transmembrane protein 120B-A (335 aa).

The stretch at 1–40 (MSLQKCQEEWSEIEKEFQQLQETHKVYKQKLEELNSLQNL) forms a coiled coil. 6 consecutive transmembrane segments (helical) span residues 100–122 (GLYL…AKFA), 130–150 (FKLY…FVLN), 157–177 (VFNF…SILI), 193–213 (VSTF…YQIF), 268–288 (FLLP…ITLF), and 300–320 (QVFV…LTTL).

Belongs to the TMEM120 family.

It is found in the nucleus inner membrane. Its function is as follows. Necessary for efficient adipogenesis. Does not show ion channel activity. The sequence is that of Transmembrane protein 120B-A (tmem120b-a) from Xenopus laevis (African clawed frog).